The sequence spans 232 residues: Large ribosomal subunit protein uL1 (232 aa).

The protein belongs to the universal ribosomal protein uL1 family. Part of the 50S ribosomal subunit.

In terms of biological role, binds directly to 23S rRNA. The L1 stalk is quite mobile in the ribosome, and is involved in E site tRNA release. Functionally, protein L1 is also a translational repressor protein, it controls the translation of the L11 operon by binding to its mRNA. The sequence is that of Large ribosomal subunit protein uL1 from Stenotrophomonas maltophilia (strain K279a).